A 243-amino-acid polypeptide reads, in one-letter code: Protein HUA2 (243 aa).

It localises to the cytoplasm. Functionally, may have a role in actin patch assembly. The polypeptide is Protein HUA2 (HUA2) (Saccharomyces cerevisiae (strain ATCC 204508 / S288c) (Baker's yeast)).